The primary structure comprises 122 residues: UPF0102 protein CLH_1204 (122 aa).

The protein belongs to the UPF0102 family.

The protein is UPF0102 protein CLH_1204 of Clostridium botulinum (strain Alaska E43 / Type E3).